The chain runs to 252 residues: 5'-nucleotidase SurE (252 aa).

Residues Asp-8, Asp-9, Ser-39, and Asn-91 each coordinate a divalent metal cation.

Belongs to the SurE nucleotidase family. Requires a divalent metal cation as cofactor.

The protein localises to the cytoplasm. It catalyses the reaction a ribonucleoside 5'-phosphate + H2O = a ribonucleoside + phosphate. Functionally, nucleotidase that shows phosphatase activity on nucleoside 5'-monophosphates. The chain is 5'-nucleotidase SurE from Legionella pneumophila (strain Paris).